Consider the following 424-residue polypeptide: Solute carrier family 67 member A1 (424 aa).

Helical transmembrane passes span 26-46 (ILLT…QFSI), 59-79 (IAFG…GPVF), 90-110 (AALT…AAAS), 156-176 (LGLC…TLVS), 184-204 (AILA…CIPA), 243-263 (IFLV…MFSI), 276-296 (AGYL…LVIG), 312-332 (VLVF…FHFC), 334-354 (LVPG…SMLI), and 391-411 (FGVP…LLVL).

The protein belongs to the major facilitator (TC 2.A.1) superfamily. Organic cation transporter (TC 2.A.1.19) family. As to quaternary structure, interacts with RNF167. Expressed at high levels in adult and fetal kidney and liver, and adult colon. Expressed in fetal renal proximal tubules (at protein level). Expressed at lower levels in heart, brain and lung.

It localises to the apical cell membrane. In terms of biological role, may act as a transporter of organic cations based on a proton efflux antiport mechanism. May play a role in the transport of chloroquine and quinidine-related compounds in kidney. Plays a role in the regulation of lipid metabolism. The polypeptide is Solute carrier family 67 member A1 (Homo sapiens (Human)).